A 132-amino-acid chain; its full sequence is MQVSEMKYGERAIQEGQLITFPNPRPGRQYTIEITLPEFTCKCPFSGYPDFATLYVSYIPHEKVVELKAIKLYINSYRDRYISHEEAVNQVLDDLVAACDPLYMKIKGDFAPRGNVHTVITVEHHRQTESLC.

Cysteine 43 serves as the catalytic Thioimide intermediate. Aspartate 50 serves as the catalytic Proton donor. Substrate is bound by residues 65–67 (VEL) and 84–85 (HE).

The protein belongs to the GTP cyclohydrolase I family. QueF type 1 subfamily.

Its subcellular location is the cytoplasm. It catalyses the reaction 7-aminomethyl-7-carbaguanine + 2 NADP(+) = 7-cyano-7-deazaguanine + 2 NADPH + 3 H(+). The protein operates within tRNA modification; tRNA-queuosine biosynthesis. Catalyzes the NADPH-dependent reduction of 7-cyano-7-deazaguanine (preQ0) to 7-aminomethyl-7-deazaguanine (preQ1). In Thermosynechococcus vestitus (strain NIES-2133 / IAM M-273 / BP-1), this protein is NADPH-dependent 7-cyano-7-deazaguanine reductase.